Here is a 629-residue protein sequence, read N- to C-terminus: 1-deoxy-D-xylulose-5-phosphate synthase (629 aa).

Thiamine diphosphate-binding positions include histidine 78 and alanine 119–serine 121. Aspartate 150 is a Mg(2+) binding site. Residues glycine 151 to alanine 152, asparagine 179, tyrosine 286, and glutamate 368 each bind thiamine diphosphate. Asparagine 179 provides a ligand contact to Mg(2+).

This sequence belongs to the transketolase family. DXPS subfamily. As to quaternary structure, homodimer. It depends on Mg(2+) as a cofactor. Thiamine diphosphate serves as cofactor.

It catalyses the reaction D-glyceraldehyde 3-phosphate + pyruvate + H(+) = 1-deoxy-D-xylulose 5-phosphate + CO2. Its pathway is metabolic intermediate biosynthesis; 1-deoxy-D-xylulose 5-phosphate biosynthesis; 1-deoxy-D-xylulose 5-phosphate from D-glyceraldehyde 3-phosphate and pyruvate: step 1/1. Its function is as follows. Catalyzes the acyloin condensation reaction between C atoms 2 and 3 of pyruvate and glyceraldehyde 3-phosphate to yield 1-deoxy-D-xylulose-5-phosphate (DXP). This Acidovorax ebreus (strain TPSY) (Diaphorobacter sp. (strain TPSY)) protein is 1-deoxy-D-xylulose-5-phosphate synthase.